The primary structure comprises 171 residues: S-ribosylhomocysteine lyase (171 aa).

Positions 54, 58, and 128 each coordinate Fe cation.

It belongs to the LuxS family. In terms of assembly, homodimer. Fe cation serves as cofactor.

The catalysed reaction is S-(5-deoxy-D-ribos-5-yl)-L-homocysteine = (S)-4,5-dihydroxypentane-2,3-dione + L-homocysteine. Functionally, involved in the synthesis of autoinducer 2 (AI-2) which is secreted by bacteria and is used to communicate both the cell density and the metabolic potential of the environment. The regulation of gene expression in response to changes in cell density is called quorum sensing. Catalyzes the transformation of S-ribosylhomocysteine (RHC) to homocysteine (HC) and 4,5-dihydroxy-2,3-pentadione (DPD). The protein is S-ribosylhomocysteine lyase of Campylobacter curvus (strain 525.92).